The sequence spans 343 residues: Ribosomal RNA small subunit methyltransferase C (343 aa).

It belongs to the methyltransferase superfamily. RsmC family. In terms of assembly, monomer.

It localises to the cytoplasm. It carries out the reaction guanosine(1207) in 16S rRNA + S-adenosyl-L-methionine = N(2)-methylguanosine(1207) in 16S rRNA + S-adenosyl-L-homocysteine + H(+). Its function is as follows. Specifically methylates the guanine in position 1207 of 16S rRNA in the 30S particle. This is Ribosomal RNA small subunit methyltransferase C from Escherichia coli O17:K52:H18 (strain UMN026 / ExPEC).